Consider the following 20-residue polypeptide: Alkaline phosphatase (20 aa).

The disordered stretch occupies residues 1 to 20; that stretch reads TDMLAVSVSSTDAIGHKYGT.

In terms of assembly, homodimer; may be disulfide-linked. The N-terminus is blocked.

It carries out the reaction a phosphate monoester + H2O = an alcohol + phosphate. Completely inhibited by thiol-reducing agents, such as DTT and 2-mercaptoethanol. Activity was also inhibited by sodium orthovanadate, sodium molybdate, N-ethylmaleimide, EDTA and zinc ion, but was not inhibited by okadaic acid. Acts against tyrosine-phosphatases. This Prevotella intermedia protein is Alkaline phosphatase.